A 399-amino-acid chain; its full sequence is Exodeoxyribonuclease 7 large subunit (399 aa).

Belongs to the XseA family. Heterooligomer composed of large and small subunits.

It is found in the cytoplasm. The catalysed reaction is Exonucleolytic cleavage in either 5'- to 3'- or 3'- to 5'-direction to yield nucleoside 5'-phosphates.. In terms of biological role, bidirectionally degrades single-stranded DNA into large acid-insoluble oligonucleotides, which are then degraded further into small acid-soluble oligonucleotides. The chain is Exodeoxyribonuclease 7 large subunit from Clostridium acetobutylicum (strain ATCC 824 / DSM 792 / JCM 1419 / IAM 19013 / LMG 5710 / NBRC 13948 / NRRL B-527 / VKM B-1787 / 2291 / W).